A 637-amino-acid chain; its full sequence is Chaperone protein DnaK (637 aa).

Phosphothreonine; by autocatalysis is present on threonine 198. The segment covering 601 to 615 (AQQKAQAEQAGADAG) has biased composition (low complexity). Residues 601-637 (AQQKAQAEQAGADAGEQPKQDDDVVDAEFEEVKEDKK) are disordered. Residues 623 to 637 (DVVDAEFEEVKEDKK) show a composition bias toward acidic residues.

Belongs to the heat shock protein 70 family.

Acts as a chaperone. The polypeptide is Chaperone protein DnaK (Vibrio atlanticus (strain LGP32) (Vibrio splendidus (strain Mel32))).